The chain runs to 518 residues: MQVTSVGHAGFLIESRAGSILCDPWVNPAYFASWFPFPDNSQLDWDALGDVDYLYVSHLHKDHFDPEHLRRYVNKDAVVLLPDYPVPDLRRELEKLGFHNFFETTDSVKHTVSGPKGDLDVMIIALRAPADGPIGDSGLVVSDRVTTVFNMNDARPVDLDVLHTDFGQIDVHMLQYSGAIWYPMVYDMPARAKEAFGIQKRQRQMDRCRQYIAQVGATWVVPSAGPPCFLDPELRDLNDDHGDPANIFPDQMVFLEQLRIHGHDGGLLMIPGSTADFTGSTLNSLTHPVDDPESIFTTGKAAYIEDYAQRMAPVLAAEKARWAPSAGEPMLEALRALFEPIMTQTDQICDGIGYPVELRLTGRDHNETVVLDFPKRVVREPIPDEKFRYGFEIPAALVRTVLRDEEPDWVNTIFLSTRFRAWRVGGYNEYLYTFFKCLTDERIAYADGWFAEAHDDSSSITLDGFQIQRRCPHLKADLSKFGVVEGNTLTCNLHGWQWNLENGRCLTTKGHELRCQKL.

K375 participates in a covalent cross-link: Isoglutamyl lysine isopeptide (Lys-Gln) (interchain with Q-Cter in protein Pup). The region spanning 431–518 (LYTFFKCLTD…KGHELRCQKL (88 aa)) is the Rieske domain. Residues C471, H473, C491, and H494 each contribute to the [2Fe-2S] cluster site.

[2Fe-2S] cluster is required as a cofactor.

This is Putative Rieske 2Fe-2S iron-sulfur protein MSMEG_6410/MSMEI_6242 from Mycolicibacterium smegmatis (strain ATCC 700084 / mc(2)155) (Mycobacterium smegmatis).